A 198-amino-acid chain; its full sequence is Endonuclease V (198 aa).

Residues D38 and D101 each contribute to the Mg(2+) site.

Belongs to the endonuclease V family. Mg(2+) serves as cofactor.

The protein localises to the cytoplasm. The catalysed reaction is Endonucleolytic cleavage at apurinic or apyrimidinic sites to products with a 5'-phosphate.. Its function is as follows. DNA repair enzyme involved in the repair of deaminated bases. Selectively cleaves double-stranded DNA at the second phosphodiester bond 3' to a deoxyinosine leaving behind the intact lesion on the nicked DNA. This is Endonuclease V from Saccharolobus islandicus (strain Y.N.15.51 / Yellowstone #2) (Sulfolobus islandicus).